A 315-amino-acid chain; its full sequence is 1-aminocyclopropane-1-carboxylate oxidase 1 (315 aa).

Residues 153 to 253 form the Fe2OG dioxygenase domain; sequence PNFGTKVSNY…RMSLASFYNP (101 aa). Residues His-177, Asp-179, and His-234 each contribute to the Fe cation site.

This sequence belongs to the iron/ascorbate-dependent oxidoreductase family. Fe cation serves as cofactor. As to expression, predominantly expressed in the petals and the stigma and style.

It carries out the reaction 1-aminocyclopropane-1-carboxylate + L-ascorbate + O2 = ethene + L-dehydroascorbate + hydrogen cyanide + CO2 + 2 H2O. It participates in alkene biosynthesis; ethylene biosynthesis via S-adenosyl-L-methionine; ethylene from S-adenosyl-L-methionine: step 2/2. This is 1-aminocyclopropane-1-carboxylate oxidase 1 (ACO1) from Solanum lycopersicum (Tomato).